Consider the following 938-residue polypeptide: Isoleucine--tRNA ligase (938 aa).

Residues 58–68 carry the 'HIGH' region motif; it reads PYANGSIHIGH. An L-isoleucyl-5'-AMP-binding site is contributed by glutamate 561. The 'KMSKS' region signature appears at 602-606; the sequence is KMSKS. Residue lysine 605 coordinates ATP. Residues cysteine 901, cysteine 904, cysteine 921, and cysteine 924 each contribute to the Zn(2+) site.

The protein belongs to the class-I aminoacyl-tRNA synthetase family. IleS type 1 subfamily. Monomer. Zn(2+) serves as cofactor.

The protein resides in the cytoplasm. The catalysed reaction is tRNA(Ile) + L-isoleucine + ATP = L-isoleucyl-tRNA(Ile) + AMP + diphosphate. Its function is as follows. Catalyzes the attachment of isoleucine to tRNA(Ile). As IleRS can inadvertently accommodate and process structurally similar amino acids such as valine, to avoid such errors it has two additional distinct tRNA(Ile)-dependent editing activities. One activity is designated as 'pretransfer' editing and involves the hydrolysis of activated Val-AMP. The other activity is designated 'posttransfer' editing and involves deacylation of mischarged Val-tRNA(Ile). In Sodalis glossinidius (strain morsitans), this protein is Isoleucine--tRNA ligase.